We begin with the raw amino-acid sequence, 701 residues long: Reverse gyrase subunit A (701 aa).

One can recognise a Toprim domain in the interval 41-197 (MVLFIVESPN…NIYRAEFHEV (157 aa)). E47 lines the Mg(2+) pocket. An RG C-terminal-type zinc finger spans residues 117–143 (IKKCLDCGHQFVDEDKCPRCGSENIDD). 4 residues coordinate Zn(2+): C120, C123, C133, and C136. D166 serves as a coordination point for Mg(2+). A Topo IA-type catalytic domain is found at 213–602 (NTNRVKAQLV…SFKKELIEIW (390 aa)). Y352 (O-(5'-phospho-DNA)-tyrosine intermediate) is an active-site residue.

Belongs to the type IA topoisomerase family. In terms of assembly, heterodimer of an RgyA and RgyB subunit. The cofactor is Zn(2+). Mg(2+) is required as a cofactor.

The protein resides in the cytoplasm. Functionally, modifies the topological state of DNA by introducing positive supercoils in an ATP-dependent process. Binds to single-stranded DNA, transiently cleaves and then rejoins the end, introducing a positive supercoil in the process. The scissile phosphodiester is attacked by the catalytic tyrosine of the enzyme, resulting in the formation of a DNA-(5'-phosphotyrosyl)-enzyme intermediate. Probably involved in rewinding DNA strands in regions of the chromosome that have opened up to allow replication, transcription, DNA repair or for DNA protection. Reconstituted holoenzyme binds dsDNA a bit better than ssDNA, this subunit preferentially binds ssDNA. In isolation this subunit relaxes negatively-supercoiled DNA, and stimulates the endogenous ATPase activity of the RgyB subunit. The protein is Reverse gyrase subunit A of Nanoarchaeum equitans (strain Kin4-M).